Reading from the N-terminus, the 197-residue chain is Phosphoheptose isomerase (197 aa).

In terms of domain architecture, SIS spans 36–197 (MVNALLNEGK…IDSQLFGSEE (162 aa)). Substrate is bound at residue 51–53 (NGG). Residues histidine 60 and glutamate 64 each coordinate Zn(2+). Residues glutamate 64, 93–94 (ND), 119–121 (STS), serine 124, and glutamine 174 each bind substrate. Zn(2+)-binding residues include glutamine 174 and histidine 182.

This sequence belongs to the SIS family. GmhA subfamily. In terms of assembly, homotetramer. The cofactor is Zn(2+).

Its subcellular location is the cytoplasm. It catalyses the reaction 2 D-sedoheptulose 7-phosphate = D-glycero-alpha-D-manno-heptose 7-phosphate + D-glycero-beta-D-manno-heptose 7-phosphate. The protein operates within carbohydrate biosynthesis; D-glycero-D-manno-heptose 7-phosphate biosynthesis; D-glycero-alpha-D-manno-heptose 7-phosphate and D-glycero-beta-D-manno-heptose 7-phosphate from sedoheptulose 7-phosphate: step 1/1. Catalyzes the isomerization of sedoheptulose 7-phosphate in D-glycero-D-manno-heptose 7-phosphate. This Pseudomonas fluorescens (strain SBW25) protein is Phosphoheptose isomerase.